A 364-amino-acid polypeptide reads, in one-letter code: DNA replication and repair protein RecF (364 aa).

Residue 30 to 37 (GANGSGKT) participates in ATP binding.

It belongs to the RecF family.

Its subcellular location is the cytoplasm. Its function is as follows. The RecF protein is involved in DNA metabolism; it is required for DNA replication and normal SOS inducibility. RecF binds preferentially to single-stranded, linear DNA. It also seems to bind ATP. The polypeptide is DNA replication and repair protein RecF (Sodalis glossinidius).